The chain runs to 555 residues: Hydroxylamine reductase (555 aa).

[4Fe-4S] cluster contacts are provided by Cys5, Cys8, Cys17, and Cys23. Hybrid [4Fe-2O-2S] cluster contacts are provided by His248, Glu272, Cys316, Cys408, Cys436, Cys461, Glu496, and Lys498. A Cysteine persulfide modification is found at Cys408.

This sequence belongs to the HCP family. It depends on [4Fe-4S] cluster as a cofactor. The cofactor is hybrid [4Fe-2O-2S] cluster.

Its subcellular location is the cytoplasm. It carries out the reaction A + NH4(+) + H2O = hydroxylamine + AH2 + H(+). In terms of biological role, catalyzes the reduction of hydroxylamine to form NH(3) and H(2)O. In Natranaerobius thermophilus (strain ATCC BAA-1301 / DSM 18059 / JW/NM-WN-LF), this protein is Hydroxylamine reductase.